A 200-amino-acid chain; its full sequence is Lipid A acyltransferase PagP (200 aa).

Residues 1–24 (MRLKLTSHTCLFALSSLLVTPAFA) form the signal peptide. Catalysis depends on residues histidine 72, aspartate 115, and serine 116.

It belongs to the lipid A palmitoyltransferase family. As to quaternary structure, homodimer.

It localises to the cell outer membrane. It catalyses the reaction a lipid A + a 1,2-diacyl-sn-glycero-3-phosphocholine = a hepta-acyl lipid A + a 2-acyl-sn-glycero-3-phosphocholine. The enzyme catalyses a lipid IVA + a 1,2-diacyl-sn-glycero-3-phosphocholine = a lipid IVB + a 2-acyl-sn-glycero-3-phosphocholine. The catalysed reaction is a lipid IIA + a 1,2-diacyl-sn-glycero-3-phosphocholine = a lipid IIB + a 2-acyl-sn-glycero-3-phosphocholine. Its function is as follows. Transfers a fatty acid residue from the sn-1 position of a phospholipid to the N-linked hydroxyfatty acid chain on the proximal unit of lipid A or its precursors. This is Lipid A acyltransferase PagP from Dickeya dadantii (strain 3937) (Erwinia chrysanthemi (strain 3937)).